We begin with the raw amino-acid sequence, 186 residues long: ATP synthase subunit delta (186 aa).

It belongs to the ATPase delta chain family. As to quaternary structure, F-type ATPases have 2 components, F(1) - the catalytic core - and F(0) - the membrane proton channel. F(1) has five subunits: alpha(3), beta(3), gamma(1), delta(1), epsilon(1). CF(0) has four main subunits: a(1), b(1), b'(1) and c(10-14). The alpha and beta chains form an alternating ring which encloses part of the gamma chain. F(1) is attached to F(0) by a central stalk formed by the gamma and epsilon chains, while a peripheral stalk is formed by the delta, b and b' chains.

It is found in the cell inner membrane. F(1)F(0) ATP synthase produces ATP from ADP in the presence of a proton or sodium gradient. F-type ATPases consist of two structural domains, F(1) containing the extramembraneous catalytic core and F(0) containing the membrane proton channel, linked together by a central stalk and a peripheral stalk. During catalysis, ATP synthesis in the catalytic domain of F(1) is coupled via a rotary mechanism of the central stalk subunits to proton translocation. Functionally, this protein is part of the stalk that links CF(0) to CF(1). It either transmits conformational changes from CF(0) to CF(1) or is implicated in proton conduction. The polypeptide is ATP synthase subunit delta (Rhodospirillum rubrum (strain ATCC 11170 / ATH 1.1.1 / DSM 467 / LMG 4362 / NCIMB 8255 / S1)).